A 226-amino-acid chain; its full sequence is Ras-related protein RABA4a (226 aa).

Residue Thr2 is modified to N-acetylthreonine. Gly24–Ser31 is a GTP binding site. Residues Ser46 to Phe54 carry the Effector region motif. Residues Asp72–Gln76, Asn130–Asp133, and Ser160–Ala161 contribute to the GTP site. The tract at residues Ala189–Ser226 is disordered. A compositionally biased stretch (polar residues) spans Pro217 to Ser226. Residues Cys223 and Cys224 are each lipidated (S-geranylgeranyl cysteine).

The protein belongs to the small GTPase superfamily. Rab family. In terms of assembly, interacts with TCTP1.

The protein resides in the cell membrane. Functionally, intracellular vesicle trafficking and protein transport. The chain is Ras-related protein RABA4a from Arabidopsis thaliana (Mouse-ear cress).